The following is a 103-amino-acid chain: Small ribosomal subunit protein uS10 (103 aa).

Belongs to the universal ribosomal protein uS10 family. As to quaternary structure, part of the 30S ribosomal subunit.

Functionally, involved in the binding of tRNA to the ribosomes. This is Small ribosomal subunit protein uS10 from Acinetobacter baylyi (strain ATCC 33305 / BD413 / ADP1).